The primary structure comprises 404 residues: Propionate kinase (404 aa).

It belongs to the acetokinase family. PduW subfamily.

It is found in the cytoplasm. The enzyme catalyses propanoate + ATP = propanoyl phosphate + ADP. It functions in the pathway polyol metabolism; 1,2-propanediol degradation. In terms of biological role, works with phosphate acetyltransferase (pta) to capture exogenous propionate and regenerate propionyl-CoA during degradation of 1,2-propanediol (1,2-PD). Functionally, expression of a cosmid containing the full 21-gene pdu operon in E.coli allows E.coli to grow on 1,2-propanediol (1,2-PD) with the appearance of bacterial microcompartments (BMC) in its cytoplasm. This chain is Propionate kinase, found in Citrobacter freundii.